The sequence spans 433 residues: MNELSDESILKYTKKISENATIDNWNDYKWQLSNSIKDVDTLENFLGITFDEKEKTEIQKAIDVFPMSITPYYASLIDIKNLGKDPIYKQSVASSKELILENFEMEDPLSEDEDSPVIGITHRYPDRVLFYINPNCAMYCRHCTRKRKVSEKSSNPSKEEIQKAIDYIKNNNKIRDVLLSGGDPLLLSDEFLDWILSEISSIKHVELIRIGSRVPVVLPQRITDNLVNVLKKYHPIWINTHYNHPVEITKESKKALDKLSDSGIPLGNQTVLLAGVNDCPYVMRKLNQKLVSSRVRPYYLYQCDLSKGISHFRTSVSKGLEIIESLIGHTTGFAVPRYVVDAPGGGGKIPVMPNYVVSWGSDRVILRNYEGIITSYVEPSDYGGCSKNCDTCDRMCIGDFEINQTGIEKLITDVDNSISLIPENNERVARRDD.

In terms of domain architecture, Radical SAM core spans 122–334 (HRYPDRVLFY…SLIGHTTGFA (213 aa)). The [4Fe-4S] cluster site is built by Cys-136, Cys-140, and Cys-143. Zn(2+) is bound at residue Cys-279. N6-(pyridoxal phosphate)lysine is present on Lys-348. Positions 389, 392, and 396 each coordinate Zn(2+).

It belongs to the radical SAM superfamily. KamA family. [4Fe-4S] cluster is required as a cofactor. Requires pyridoxal 5'-phosphate as cofactor. The cofactor is Zn(2+).

The enzyme catalyses L-lysine = (3S)-3,6-diaminohexanoate. Its function is as follows. Catalyzes the interconversion of L-alpha-lysine and L-beta-lysine. Is involved in the biosynthesis pathway of N6-acetyl-beta-lysine, a compatible solute produced by methanogenic archaea that helps cells to cope with salt stress. The protein is L-lysine 2,3-aminomutase (ablA) of Methanococcus maripaludis (strain DSM 14266 / JCM 13030 / NBRC 101832 / S2 / LL).